Here is a 763-residue protein sequence, read N- to C-terminus: Phosphoglycerol transferase I (763 aa).

4 helical membrane passes run M1–A21, W26–F46, I77–I97, and F108–F128.

This sequence belongs to the OpgB family.

Its subcellular location is the cell inner membrane. The catalysed reaction is a phosphatidylglycerol + a membrane-derived-oligosaccharide D-glucose = a 1,2-diacyl-sn-glycerol + a membrane-derived-oligosaccharide 6-(glycerophospho)-D-glucose.. It functions in the pathway glycan metabolism; osmoregulated periplasmic glucan (OPG) biosynthesis. Transfers a phosphoglycerol residue from phosphatidylglycerol to the membrane-bound nascent glucan backbones. In Escherichia coli (strain SE11), this protein is Phosphoglycerol transferase I.